A 600-amino-acid polypeptide reads, in one-letter code: Elongation factor 4 (600 aa).

Positions 5–187 constitute a tr-type G domain; the sequence is KYIRNFSIIA…AIVNKLHPPK (183 aa). GTP-binding positions include 17 to 22 and 134 to 137; these read DHGKST and NKID.

This sequence belongs to the TRAFAC class translation factor GTPase superfamily. Classic translation factor GTPase family. LepA subfamily.

The protein resides in the cell inner membrane. The catalysed reaction is GTP + H2O = GDP + phosphate + H(+). Its function is as follows. Required for accurate and efficient protein synthesis under certain stress conditions. May act as a fidelity factor of the translation reaction, by catalyzing a one-codon backward translocation of tRNAs on improperly translocated ribosomes. Back-translocation proceeds from a post-translocation (POST) complex to a pre-translocation (PRE) complex, thus giving elongation factor G a second chance to translocate the tRNAs correctly. Binds to ribosomes in a GTP-dependent manner. The sequence is that of Elongation factor 4 from Rickettsia akari (strain Hartford).